The sequence spans 855 residues: Inactive rhomboid protein 1 (855 aa).

A disordered region spans residues 1–35; sequence MSEARRDSTSSLQRKKPPWLKLDIPSAAPATAEEP. Residues 1 to 411 lie on the Cytoplasmic side of the membrane; sequence MSEARRDSTS…HRPFFTYWLT (411 aa). Residues 25 to 35 show a composition bias toward low complexity; the sequence is PSAAPATAEEP. Residues Ser-76 and Ser-176 each carry the phosphoserine modification. Thr-180 and Thr-183 each carry phosphothreonine. Ser-390 carries the post-translational modification Phosphoserine. Residues 412 to 432 traverse the membrane as a helical segment; it reads FVHSLVTILAVCIYGIAPVGF. The Lumenal segment spans residues 433–655; that stretch reads SQHETVDSVL…NPEVPDQFYR (223 aa). Asn-583 carries N-linked (GlcNAc...) asparagine glycosylation. A helical transmembrane segment spans residues 656–676; that stretch reads LWLSLFLHAGILHCLVSICFQ. Residues 677 to 691 lie on the Cytoplasmic side of the membrane; it reads MTVLRDLEKLAGWHR. The helical transmembrane segment at 692 to 712 threads the bilayer; the sequence is IAIIYLLSGVTGNLASAIFLP. Topologically, residues 713–714 are lumenal; the sequence is YR. Residues 715–735 traverse the membrane as a helical segment; it reads AEVGPAGSQFGILACLFVELF. Topologically, residues 736–746 are cytoplasmic; sequence QSWQILARPWR. A helical transmembrane segment spans residues 747–767; it reads AFFKLLAVVLFLFTFGLLPWI. Topologically, residues 768–772 are lumenal; it reads DNFAH. A helical transmembrane segment spans residues 773–793; that stretch reads ISGFISGLFLSFAFLPYISFG. Over 794–803 the chain is Cytoplasmic; sequence KFDLYRKRCQ. A helical membrane pass occupies residues 804 to 824; that stretch reads IIVFQVVFLGLLAGLVVLFYV. At 825–855 the chain is on the lumenal side; sequence YPVRCEWCEFLTCIPFTDKFCEKYELDAQLH.

It belongs to the peptidase S54 family. In terms of assembly, homodimer, or homooligomer. Interacts with TGFA and HBEGF. Interacts with EGF; may retain EGF in the endoplasmic reticulum and regulates its degradation through the endoplasmic reticulum-associated degradation (ERAD). Interacts (via cytoplasmic N-terminus) with FRMD8/iTAP; this interaction leads to mutual protein stabilization. Interacts with ADAM17/TACE.

Its subcellular location is the endoplasmic reticulum membrane. The protein resides in the golgi apparatus membrane. Functionally, regulates ADAM17 protease, a sheddase of the epidermal growth factor (EGF) receptor ligands and TNF, thereby plays a role in sleep, cell survival, proliferation, migration and inflammation. Does not exhibit any protease activity on its own. This chain is Inactive rhomboid protein 1 (RHBDF1), found in Callithrix jacchus (White-tufted-ear marmoset).